A 185-amino-acid polypeptide reads, in one-letter code: Ribosome-recycling factor (185 aa).

Belongs to the RRF family.

It is found in the cytoplasm. Its function is as follows. Responsible for the release of ribosomes from messenger RNA at the termination of protein biosynthesis. May increase the efficiency of translation by recycling ribosomes from one round of translation to another. The sequence is that of Ribosome-recycling factor from Oceanobacillus iheyensis (strain DSM 14371 / CIP 107618 / JCM 11309 / KCTC 3954 / HTE831).